The primary structure comprises 475 residues: GTPase Der (475 aa).

2 consecutive EngA-type G domains span residues 2–166 and 213–386; these read LRIA…NIPE and LKIA…ETVS. Residues 8-15, 55-59, 118-121, 219-226, 266-270, and 331-334 each bind GTP; these read GRPNVGKS, DTGGV, NKAD, DTAGL, and NKWD. The region spanning 387-471 is the KH-like domain; it reads RKVPTPVVNK…PFDLEIKEKA (85 aa).

It belongs to the TRAFAC class TrmE-Era-EngA-EngB-Septin-like GTPase superfamily. EngA (Der) GTPase family. In terms of assembly, associates with the 50S ribosomal subunit.

In terms of biological role, GTPase that plays an essential role in the late steps of ribosome biogenesis. The chain is GTPase Der from Chlamydia felis (strain Fe/C-56) (Chlamydophila felis).